The following is a 60-amino-acid chain: Large ribosomal subunit protein bL32 (60 aa).

It belongs to the bacterial ribosomal protein bL32 family.

This Kosmotoga olearia (strain ATCC BAA-1733 / DSM 21960 / TBF 19.5.1) protein is Large ribosomal subunit protein bL32.